The sequence spans 229 residues: Secretory carrier-associated membrane protein 4 (229 aa).

Topologically, residues 1–39 (MSEKENNFPPLPKFIPVKPCFYQNFSDEIPVEHQVLVKR) are cytoplasmic. The next 4 helical transmembrane spans lie at 40-60 (IYRL…ACLA), 61-81 (WWIG…LLLF), 105-125 (FMAF…QAIG), and 149-169 (VVML…AIAI). At 170–229 (MKVHRIYRGAGGSFQKAQTEWNTGTWRNPPSREAQYNNFSGNSLPEYPTVPSYPGSGQWP) the chain is on the cytoplasmic side. A Phosphothreonine modification is found at T194. Residues 208–229 (FSGNSLPEYPTVPSYPGSGQWP) are disordered.

The protein belongs to the SCAMP family.

It localises to the membrane. In terms of biological role, probably involved in membrane protein trafficking. This Pongo abelii (Sumatran orangutan) protein is Secretory carrier-associated membrane protein 4 (SCAMP4).